The chain runs to 840 residues: E3 ubiquitin-protein ligase RNF19A (840 aa).

The tract at residues 40–61 (SDRDLQSSTSSVSLPSVKKAPK) is disordered. Residues 45–56 (QSSTSSVSLPSV) are compositionally biased toward low complexity. The TRIAD supradomain stretch occupies residues 128 to 351 (DFIECPLCLL…LSPSGCTFWG (224 aa)). Residues cysteine 132, cysteine 135, cysteine 150, histidine 152, cysteine 155, cysteine 158, cysteine 176, cysteine 179, cysteine 219, cysteine 224, cysteine 241, cysteine 246, cysteine 251, cysteine 254, histidine 259, cysteine 264, cysteine 301, and cysteine 304 each coordinate Zn(2+). The RING-type 1 zinc finger occupies 132-179 (CPLCLLRHSKDRFPDIMTCHHRSCVDCLRQYLRIEISESRVNISCPEC). An IBR-type zinc finger spans residues 199–264 (EKYEEFMLRR…KQIWHPNQTC (66 aa)). The RING-type 2; atypical zinc-finger motif lies at 301–332 (CPRCAAYIIKMNDGSCNHMTCAVCGCEFCWLC). The active site involves cysteine 316. 6 residues coordinate Zn(2+): cysteine 321, cysteine 324, cysteine 329, cysteine 332, histidine 340, and cysteine 347. A run of 2 helical transmembrane segments spans residues 368 to 388 (LVGAPVGIALIAGIAIPAMII) and 424 to 444 (VIVSPVVAAVTVGIGVPIMLA). Disordered regions lie at residues 625–685 (FKFR…GNMK), 700–721 (QQSTNSSEFEAPSLSDSMPSVA), and 786–808 (CSDVPQPSHAADEHGTSRSGGKP). The residue at position 631 (serine 631) is a Phosphoserine. The segment at 660 to 840 (ATKWSKEATG…DLKVAVQTEI (181 aa)) is interaction with CASR. Residues 671-683 (KKSKSGKLRKKGN) show a composition bias toward basic residues. The span at 700–717 (QQSTNSSEFEAPSLSDSM) shows a compositional bias: polar residues.

This sequence belongs to the RBR family. RNF19 subfamily. Interacts with UBE2L3 and UBE2L6. Also interacts with transcription factor Sp1. Interacts with SNCAIP and CASR. Interacts with VCP.

The protein localises to the membrane. The protein resides in the cytoplasm. It is found in the cytoskeleton. It localises to the microtubule organizing center. Its subcellular location is the centrosome. It carries out the reaction [E2 ubiquitin-conjugating enzyme]-S-ubiquitinyl-L-cysteine + [acceptor protein]-L-lysine = [E2 ubiquitin-conjugating enzyme]-L-cysteine + [acceptor protein]-N(6)-ubiquitinyl-L-lysine.. It participates in protein modification; protein ubiquitination. Its function is as follows. E3 ubiquitin-protein ligase which accepts ubiquitin from E2 ubiquitin-conjugating enzymes UBE2L3 and UBE2L6 in the form of a thioester and then directly transfers the ubiquitin to targeted substrates, such as SNCAIP or CASR. This is E3 ubiquitin-protein ligase RNF19A (Rnf19a) from Mus musculus (Mouse).